A 193-amino-acid polypeptide reads, in one-letter code: dCTP deaminase, dUMP-forming (193 aa).

DCTP is bound by residues 101–106 (KSSLGR), Asp-119, 127–129 (TLE), Gln-148, Tyr-162, and Gln-174. Catalysis depends on Glu-129, which acts as the Proton donor/acceptor.

It belongs to the dCTP deaminase family. As to quaternary structure, homotrimer.

It catalyses the reaction dCTP + 2 H2O = dUMP + NH4(+) + diphosphate. It participates in pyrimidine metabolism; dUMP biosynthesis; dUMP from dCTP: step 1/1. Its function is as follows. Bifunctional enzyme that catalyzes both the deamination of dCTP to dUTP and the hydrolysis of dUTP to dUMP without releasing the toxic dUTP intermediate. The chain is dCTP deaminase, dUMP-forming from Bifidobacterium adolescentis (strain ATCC 15703 / DSM 20083 / NCTC 11814 / E194a).